We begin with the raw amino-acid sequence, 874 residues long: Alanine--tRNA ligase (874 aa).

H564, H568, C665, and H669 together coordinate Zn(2+).

The protein belongs to the class-II aminoacyl-tRNA synthetase family. Zn(2+) is required as a cofactor.

The protein resides in the cytoplasm. The catalysed reaction is tRNA(Ala) + L-alanine + ATP = L-alanyl-tRNA(Ala) + AMP + diphosphate. Functionally, catalyzes the attachment of alanine to tRNA(Ala) in a two-step reaction: alanine is first activated by ATP to form Ala-AMP and then transferred to the acceptor end of tRNA(Ala). Also edits incorrectly charged Ser-tRNA(Ala) and Gly-tRNA(Ala) via its editing domain. The polypeptide is Alanine--tRNA ligase (Burkholderia pseudomallei (strain 668)).